The sequence spans 345 residues: Holliday junction branch migration complex subunit RuvB (345 aa).

The tract at residues 4–185 (LDNRFVTPLS…FGVLCPMEFY (182 aa)) is large ATPase domain (RuvB-L). ATP-binding positions include leucine 24, arginine 25, glycine 66, lysine 69, threonine 70, threonine 71, 132–134 (EDY), arginine 175, tyrosine 185, and arginine 222. Threonine 70 is a Mg(2+) binding site. The small ATPAse domain (RuvB-S) stretch occupies residues 186–256 (NEEELKDIIV…MTNKALNLLE (71 aa)). The tract at residues 259 to 345 (KEGFDSIDTK…ENINQYKFKI (87 aa)) is head domain (RuvB-H). Residues arginine 314 and arginine 319 each coordinate DNA.

This sequence belongs to the RuvB family. Homohexamer. Forms an RuvA(8)-RuvB(12)-Holliday junction (HJ) complex. HJ DNA is sandwiched between 2 RuvA tetramers; dsDNA enters through RuvA and exits via RuvB. An RuvB hexamer assembles on each DNA strand where it exits the tetramer. Each RuvB hexamer is contacted by two RuvA subunits (via domain III) on 2 adjacent RuvB subunits; this complex drives branch migration. In the full resolvosome a probable DNA-RuvA(4)-RuvB(12)-RuvC(2) complex forms which resolves the HJ.

The protein localises to the cytoplasm. It carries out the reaction ATP + H2O = ADP + phosphate + H(+). Functionally, the RuvA-RuvB-RuvC complex processes Holliday junction (HJ) DNA during genetic recombination and DNA repair, while the RuvA-RuvB complex plays an important role in the rescue of blocked DNA replication forks via replication fork reversal (RFR). RuvA specifically binds to HJ cruciform DNA, conferring on it an open structure. The RuvB hexamer acts as an ATP-dependent pump, pulling dsDNA into and through the RuvAB complex. RuvB forms 2 homohexamers on either side of HJ DNA bound by 1 or 2 RuvA tetramers; 4 subunits per hexamer contact DNA at a time. Coordinated motions by a converter formed by DNA-disengaged RuvB subunits stimulates ATP hydrolysis and nucleotide exchange. Immobilization of the converter enables RuvB to convert the ATP-contained energy into a lever motion, pulling 2 nucleotides of DNA out of the RuvA tetramer per ATP hydrolyzed, thus driving DNA branch migration. The RuvB motors rotate together with the DNA substrate, which together with the progressing nucleotide cycle form the mechanistic basis for DNA recombination by continuous HJ branch migration. Branch migration allows RuvC to scan DNA until it finds its consensus sequence, where it cleaves and resolves cruciform DNA. The sequence is that of Holliday junction branch migration complex subunit RuvB from Clostridium tetani (strain Massachusetts / E88).